The chain runs to 185 residues: Disulfide bond formation protein B (185 aa).

Over M1–S25 the chain is Cytoplasmic. A helical membrane pass occupies residues W26–Y42. The Periplasmic segment spans residues F43–L60. C52 and C55 form a disulfide bridge. The helical transmembrane segment at A61–P76 threads the bilayer. At N77–L83 the chain is on the cytoplasmic side. A helical membrane pass occupies residues S84–I101. Residues K102–Q156 are Periplasmic-facing. A disulfide bridge connects residues C116 and C142. The helical transmembrane segment at W157 to S175 threads the bilayer. The Cytoplasmic portion of the chain corresponds to A176–F185.

Belongs to the DsbB family.

The protein resides in the cell inner membrane. In terms of biological role, required for disulfide bond formation in some periplasmic proteins. Acts by oxidizing the DsbA protein. The protein is Disulfide bond formation protein B of Psychromonas ingrahamii (strain DSM 17664 / CCUG 51855 / 37).